A 130-amino-acid chain; its full sequence is Type VII secretion system extracellular protein C (130 aa).

This sequence belongs to the EsxC family. As to quaternary structure, forms both homodimers and heterodimers with EsxA. Homodimerization is calcium-dependent.

It is found in the secreted. The polypeptide is Type VII secretion system extracellular protein C (Staphylococcus aureus (strain USA300)).